Here is a 186-residue protein sequence, read N- to C-terminus: Peptidyl-tRNA hydrolase (186 aa).

Y16 contacts tRNA. H21 acts as the Proton acceptor in catalysis. TRNA is bound by residues Y66, N68, and N114.

The protein belongs to the PTH family. Monomer.

The protein resides in the cytoplasm. The enzyme catalyses an N-acyl-L-alpha-aminoacyl-tRNA + H2O = an N-acyl-L-amino acid + a tRNA + H(+). Functionally, hydrolyzes ribosome-free peptidyl-tRNAs (with 1 or more amino acids incorporated), which drop off the ribosome during protein synthesis, or as a result of ribosome stalling. In terms of biological role, catalyzes the release of premature peptidyl moieties from peptidyl-tRNA molecules trapped in stalled 50S ribosomal subunits, and thus maintains levels of free tRNAs and 50S ribosomes. The chain is Peptidyl-tRNA hydrolase from Ureaplasma urealyticum serovar 10 (strain ATCC 33699 / Western).